Reading from the N-terminus, the 211-residue chain is MDITIVNHPLVASRLTLMRDERSDNAAFRAAASDLGAMLIYEASRDLAVEHFDTQTPVAVAEGTRLEKPPIIVPIIRAGLGMIDPALSMIPDAQVGFIGLARDEETHEPVPYLEALPEDLSDQPVFLVDPMLATGGSLLHAIRLLAERGATDITAICMVSAQPGVDALKNSGLPCRLVTAAIDPELNEDAYIVPGLGDAGDRLYGPRNIEL.

5-phospho-alpha-D-ribose 1-diphosphate-binding positions include Arg-77, Arg-102, and 129 to 137; that span reads DPMLATGGS. Uracil is bound by residues Ile-192 and 197–199; that span reads GDA. A 5-phospho-alpha-D-ribose 1-diphosphate-binding site is contributed by Asp-198.

The protein belongs to the UPRTase family. It depends on Mg(2+) as a cofactor.

It catalyses the reaction UMP + diphosphate = 5-phospho-alpha-D-ribose 1-diphosphate + uracil. The protein operates within pyrimidine metabolism; UMP biosynthesis via salvage pathway; UMP from uracil: step 1/1. Its activity is regulated as follows. Allosterically activated by GTP. Its function is as follows. Catalyzes the conversion of uracil and 5-phospho-alpha-D-ribose 1-diphosphate (PRPP) to UMP and diphosphate. The sequence is that of Uracil phosphoribosyltransferase from Corynebacterium efficiens (strain DSM 44549 / YS-314 / AJ 12310 / JCM 11189 / NBRC 100395).